Consider the following 117-residue polypeptide: MNYDFSRELRLLTPEDYKFVFKQAHRAGSPHFTILARENSLSHPRLGLAVPKKQIKTAVGRNKFKRIVRESFRNKQHSLPAKDFVVIAKKSAQELSNEDFNKLLDKLWHRLSRPSRG.

This sequence belongs to the RnpA family. In terms of assembly, consists of a catalytic RNA component (M1 or rnpB) and a protein subunit.

It catalyses the reaction Endonucleolytic cleavage of RNA, removing 5'-extranucleotides from tRNA precursor.. In terms of biological role, RNaseP catalyzes the removal of the 5'-leader sequence from pre-tRNA to produce the mature 5'-terminus. It can also cleave other RNA substrates such as 4.5S RNA. The protein component plays an auxiliary but essential role in vivo by binding to the 5'-leader sequence and broadening the substrate specificity of the ribozyme. The polypeptide is Ribonuclease P protein component (Aliivibrio fischeri (strain ATCC 700601 / ES114) (Vibrio fischeri)).